Here is a 572-residue protein sequence, read N- to C-terminus: Linalool synthase TPS2, chloroplastic (572 aa).

A chloroplast-targeting transit peptide spans 1-27 (EVEEPKTKISASTAEASSSRISSAKMT). Positions 1–45 (EVEEPKTKISASTAEASSSRISSAKMTADGTIKLGDQSPLKQSEK) are disordered. Over residues 8 to 28 (KISASTAEASSSRISSAKMTA) the composition is skewed to low complexity. Positions 284, 321, 325, 462, and 465 each coordinate (2E)-geranyl diphosphate. Mg(2+) contacts are provided by Asp321 and Asp325. A DDXXD motif motif is present at residues 321–325 (DDVYD). Mg(2+)-binding residues include Asn465, Thr469, and Ser473.

The protein belongs to the terpene synthase family. Tpsb subfamily. In terms of assembly, monomer. It depends on Mg(2+) as a cofactor. The cofactor is Mn(2+). Expressed in flowers and fruits.

Its subcellular location is the plastid. The protein resides in the chloroplast. It carries out the reaction (2E)-geranyl diphosphate = beta-myrcene + diphosphate. The enzyme catalyses (2E)-geranyl diphosphate + H2O = linalool + diphosphate. It catalyses the reaction (2E)-geranyl diphosphate = (Z)-beta-ocimene + diphosphate. The catalysed reaction is (2E)-geranyl diphosphate = (E)-beta-ocimene + diphosphate. It functions in the pathway secondary metabolite biosynthesis; terpenoid biosynthesis. Its function is as follows. Monoterpene synthase (mono-TPS) involved in the biosynthesis of monoterpenes natural products, constituent of coffee beverage aroma. Catalyzes the conversion of (2E)-geranyl diphosphate (GPP) into linalool and beta-myrcene, and, as minor products, cis-ocimene and trans-ocimene. Not able to use geranylgeranyl pyrophosphate (GGPP) and farnesyl pyrophosphate (FPP) as substrates. The polypeptide is Linalool synthase TPS2, chloroplastic (Coffea arabica (Arabian coffee)).